We begin with the raw amino-acid sequence, 94 residues long: Large ribosomal subunit protein bL25 (94 aa).

It belongs to the bacterial ribosomal protein bL25 family. As to quaternary structure, part of the 50S ribosomal subunit; part of the 5S rRNA/L5/L18/L25 subcomplex. Contacts the 5S rRNA. Binds to the 5S rRNA independently of L5 and L18.

Functionally, this is one of the proteins that binds to the 5S RNA in the ribosome where it forms part of the central protuberance. This chain is Large ribosomal subunit protein bL25, found in Edwardsiella ictaluri (strain 93-146).